Reading from the N-terminus, the 284-residue chain is Polyamine aminopropyltransferase (284 aa).

One can recognise a PABS domain in the interval 2 to 237 (ELWYTEKHTE…GHWLFGFASK (236 aa)). Q31 is an S-methyl-5'-thioadenosine binding site. 2 residues coordinate spermidine: H62 and D86. S-methyl-5'-thioadenosine contacts are provided by residues E106 and 137–138 (DG). D155 acts as the Proton acceptor in catalysis. 155 to 158 (DSTD) lines the spermidine pocket. Position 162 (P162) interacts with S-methyl-5'-thioadenosine.

It belongs to the spermidine/spermine synthase family. In terms of assembly, homodimer or homotetramer.

Its subcellular location is the cytoplasm. It carries out the reaction S-adenosyl 3-(methylsulfanyl)propylamine + putrescine = S-methyl-5'-thioadenosine + spermidine + H(+). It participates in amine and polyamine biosynthesis; spermidine biosynthesis; spermidine from putrescine: step 1/1. Its function is as follows. Catalyzes the irreversible transfer of a propylamine group from the amino donor S-adenosylmethioninamine (decarboxy-AdoMet) to putrescine (1,4-diaminobutane) to yield spermidine. In Clostridium botulinum (strain Alaska E43 / Type E3), this protein is Polyamine aminopropyltransferase.